A 74-amino-acid chain; its full sequence is Large ribosomal subunit protein bL31 (74 aa).

Residues cysteine 16, cysteine 18, cysteine 38, and cysteine 41 each coordinate Zn(2+).

The protein belongs to the bacterial ribosomal protein bL31 family. Type A subfamily. Part of the 50S ribosomal subunit. The cofactor is Zn(2+).

In terms of biological role, binds the 23S rRNA. The polypeptide is Large ribosomal subunit protein bL31 (rpmE) (Streptomyces coelicolor (strain ATCC BAA-471 / A3(2) / M145)).